The following is a 514-amino-acid chain: MGMKFMAAVAFLALQLIVMAAAEDQSAQIMLDSDIEQYLRSNRSLKKLVHSRHDAATVFNVEQYGAVGDGKHDSTEAFATTWNAACKKASAVLLVPANKKFFVNNLVFRGPCQPHLSFKVDGTIVAQPDPARWKNSKIWLQFAQLTDFNLMGTGVIDGQGQQWWAGQCKVVNGRTVCNDRNRPTAIKIDYSKSVTVKELTLMNSPEFHLVFGECEGVKIQGLKIKAPRDSPNTDGIDIFASKRFHIEKCVIGTGDDCIAIGTGSSNITIKDLICGPGHGISIGSLGRDNSRAEVSHVHVNRAKFIDTQNGLRIKTWQGGSGLASYITYENVEMINSENPILINQFYCTSASACQNQRSAVQIQGVTYKNIHGTSATAAAIQLMCSDSVPCTGIQLSNVSLKLTSGKPASCVDKNARGFYSGRLIPTCKNLRPGPSPKEFELQQQPTTVMDENKGACAKGDSTCISLSSSPPNCKNKCKGCQPCKPKLIIVHPNKPQDYYPQKWVCSCHNKIYNP.

The first 22 residues, 1 to 22 (MGMKFMAAVAFLALQLIVMAAA), serve as a signal peptide directing secretion. Positions 23-50 (EDQSAQIMLDSDIEQYLRSNRSLKKLVH) are excised as a propeptide. 6 PbH1 repeats span residues 214–240 (CEGV…DIFA), 241–262 (SKRF…AIGT), 264–284 (SSNI…SIGS), 294–315 (VSHV…RIKT), 323–344 (ASYI…LINQ), and 357–384 (RSAV…QLMC). D255 functions as the Proton donor in the catalytic mechanism. N-linked (GlcNAc...) asparagine glycosylation is present at N266. H278 is an active-site residue. An N-linked (GlcNAc...) asparagine glycan is attached at N397.

This sequence belongs to the glycosyl hydrolase 28 family.

The protein resides in the secreted. It localises to the cell wall. The enzyme catalyses (1,4-alpha-D-galacturonosyl)n+m + H2O = (1,4-alpha-D-galacturonosyl)n + (1,4-alpha-D-galacturonosyl)m.. This Chamaecyparis obtusa (Hinoki false-cypress) protein is Polygalacturonase.